The following is a 176-amino-acid chain: ATP synthase subunit b (176 aa).

Residues 26–45 (VINLAIIIGVLVYFGRGLLG) form a helical membrane-spanning segment.

This sequence belongs to the ATPase B chain family. F-type ATPases have 2 components, F(1) - the catalytic core - and F(0) - the membrane proton channel. F(1) has five subunits: alpha(3), beta(3), gamma(1), delta(1), epsilon(1). F(0) has four main subunits: a(1), b(1), b'(1) and c(10-14). The alpha and beta chains form an alternating ring which encloses part of the gamma chain. F(1) is attached to F(0) by a central stalk formed by the gamma and epsilon chains, while a peripheral stalk is formed by the delta, b and b' chains.

The protein localises to the cellular thylakoid membrane. Its function is as follows. F(1)F(0) ATP synthase produces ATP from ADP in the presence of a proton or sodium gradient. F-type ATPases consist of two structural domains, F(1) containing the extramembraneous catalytic core and F(0) containing the membrane proton channel, linked together by a central stalk and a peripheral stalk. During catalysis, ATP synthesis in the catalytic domain of F(1) is coupled via a rotary mechanism of the central stalk subunits to proton translocation. Component of the F(0) channel, it forms part of the peripheral stalk, linking F(1) to F(0). The polypeptide is ATP synthase subunit b (Synechococcus sp. (strain PCC 6716)).